Consider the following 604-residue polypeptide: Aspartate--tRNA(Asp/Asn) ligase (604 aa).

An L-aspartate-binding site is contributed by Glu168. Positions 192 to 195 (QLFK) are aspartate. Arg214 contacts L-aspartate. ATP contacts are provided by residues 214 to 216 (RDE) and Gln223. His446 contributes to the L-aspartate binding site. Position 480 (Glu480) interacts with ATP. Arg487 serves as a coordination point for L-aspartate. Residue 532–535 (GWDR) coordinates ATP. Residues 575 to 604 (LEAGVDARPKPEARAQAGTAGPAAPVADPT) are disordered. Residues 577 to 587 (AGVDARPKPEA) show a composition bias toward basic and acidic residues. The span at 588–604 (RAQAGTAGPAAPVADPT) shows a compositional bias: low complexity.

This sequence belongs to the class-II aminoacyl-tRNA synthetase family. Type 1 subfamily. In terms of assembly, homodimer.

Its subcellular location is the cytoplasm. It catalyses the reaction tRNA(Asx) + L-aspartate + ATP = L-aspartyl-tRNA(Asx) + AMP + diphosphate. Aspartyl-tRNA synthetase with relaxed tRNA specificity since it is able to aspartylate not only its cognate tRNA(Asp) but also tRNA(Asn). Reaction proceeds in two steps: L-aspartate is first activated by ATP to form Asp-AMP and then transferred to the acceptor end of tRNA(Asp/Asn). The polypeptide is Aspartate--tRNA(Asp/Asn) ligase (Salinispora arenicola (strain CNS-205)).